We begin with the raw amino-acid sequence, 39 residues long: TVIDVKCTSPKQCLPPCKAQFGIRAGAKCMNGKCKCYPH.

Cystine bridges form between cysteine 7–cysteine 29, cysteine 13–cysteine 34, and cysteine 17–cysteine 36.

This sequence belongs to the short scorpion toxin superfamily. Potassium channel inhibitor family. Alpha-KTx 02 subfamily. As to expression, expressed by the venom gland.

The protein localises to the secreted. Functionally, potent selective inhibitor of Kv1.1/KCNA1, Kv1.2/KCNA2, Kv1.3/KCNA3 voltage-gated potassium channels. Weak inhibitor of Kv1.6/KCNA6 potassium channel. It also shows a weak interaction with nicotinic acetylcholine receptors (nAChR), suggesting it may weakly inhibit it. This chain is Potassium channel toxin alpha-KTx 2.5, found in Centruroides limbatus (Bark scorpion).